Here is a 120-residue protein sequence, read N- to C-terminus: MPMVRVATNLPNEKVPVDFEIRLTDLLARSMGKPRERIAVEIAAGARLVHGATHDPVTVISIKSIGAVSAEDNIRNTAAITEFCGKELGLPKDKVVITFHDLPPATVGFNGTTVAEANKK.

Belongs to the MIF family.

The protein is MIF-like protein mif-2 (mif-2) of Caenorhabditis elegans.